The chain runs to 238 residues: MIAFIVLLSLAAVLQQSSGTVDFASESSNKKDYRKEIVDKHNALRRSVKPTARNMLRMEWNSRAAQNAKRWADRCTFAHSPPHTRTVGKLRCGENIFMSTQPFAWSGVVQAWYDEVKKFVYGIGAKPPGSVIGHYTQVVWYKSHLLGCASAKCSSTKYLYVCQYCPAGNIRGSIATPYKSGPACGDCPSACVNGLCTNPCKYEDAFTNCKALAKKTKCKTEWIKSKCPATCFCHNKII.

A signal peptide spans Met-1–Gly-19. The region spanning Val-38–Tyr-164 is the SCP domain. Intrachain disulfides connect Cys-75–Cys-153, Cys-92–Cys-165, Cys-148–Cys-162, Cys-184–Cys-191, Cys-187–Cys-196, Cys-200–Cys-233, Cys-209–Cys-227, and Cys-218–Cys-231. Positions Cys-200 to Cys-233 constitute a ShKT domain.

It belongs to the CRISP family. Expressed by the venom gland.

It localises to the secreted. Functionally, blocks contraction of smooth muscle elicited by high potassium-induced depolarization, but does not block caffeine-stimulated contraction. May target voltage-gated calcium channels on smooth muscle. The chain is Cysteine-rich venom protein from Austrelaps superbus (Lowland copperhead snake).